A 688-amino-acid polypeptide reads, in one-letter code: Zinc finger CCCH domain-containing protein 22 (688 aa).

Residues 62–123 form a disordered region; sequence ALLPPPPPPS…QPFSRSNGSV (62 aa). A compositionally biased stretch (low complexity) spans 101–117; it reads PLSASSPSSWAQAQPFS. The C3H1-type zinc-finger motif lies at 233-260; the sequence is GFGWKPCLYYARGFCKNGSSCRFVHGDD. In terms of domain architecture, RRM spans 366 to 442; that stretch reads RQIYLTFPAD…RVLVKPYKEK (77 aa). A coiled-coil region spans residues 487-522; the sequence is TNEMMLRRKLEEQQQAAELQQAIELHSRRLMDLQLL. The tract at residues 552 to 624 is disordered; it reads LATTMVESPP…PTKSSVSAHQ (73 aa). Residues 574 to 589 show a composition bias toward basic and acidic residues; it reads TEERKMVNGGGDKEES. Residues 613 to 624 are compositionally biased toward polar residues; that stretch reads ASPTKSSVSAHQ.

This is Zinc finger CCCH domain-containing protein 22 from Oryza sativa subsp. japonica (Rice).